A 131-amino-acid chain; its full sequence is Sec-independent protein translocase protein TatB (131 aa).

The chain crosses the membrane as a helical span at residues 2-22 (FANIGWGEMLVLVMVGLVVLG). A disordered region spans residues 90-131 (DSLFTGDFDRPTPKKPDAAGSAGPDATEQIGAGPIPFDSDAT). A compositionally biased stretch (basic and acidic residues) spans 96–106 (DFDRPTPKKPD).

Belongs to the TatB family. As to quaternary structure, the Tat system comprises two distinct complexes: a TatABC complex, containing multiple copies of TatA, TatB and TatC subunits, and a separate TatA complex, containing only TatA subunits. Substrates initially bind to the TatABC complex, which probably triggers association of the separate TatA complex to form the active translocon.

Its subcellular location is the cell membrane. Its function is as follows. Part of the twin-arginine translocation (Tat) system that transports large folded proteins containing a characteristic twin-arginine motif in their signal peptide across membranes. Together with TatC, TatB is part of a receptor directly interacting with Tat signal peptides. TatB may form an oligomeric binding site that transiently accommodates folded Tat precursor proteins before their translocation. In Mycobacterium bovis (strain ATCC BAA-935 / AF2122/97), this protein is Sec-independent protein translocase protein TatB.